The chain runs to 129 residues: Small ribosomal subunit protein uS9 (129 aa).

Belongs to the universal ribosomal protein uS9 family.

This chain is Small ribosomal subunit protein uS9, found in Aliarcobacter butzleri (strain RM4018) (Arcobacter butzleri).